A 102-amino-acid chain; its full sequence is UPF0213 protein in potE 3'region (102 aa).

One can recognise a GIY-YIG domain in the interval 6-81; the sequence is SPWHLYMLRL…KQLSKTQKER (76 aa).

This sequence belongs to the UPF0213 family.

In Serratia liquefaciens, this protein is UPF0213 protein in potE 3'region.